A 262-amino-acid chain; its full sequence is Putative phosphatase HI_0003 (262 aa).

Asp9 functions as the Nucleophile in the catalytic mechanism. Mg(2+) is bound by residues Asp9 and Asn11. Residues 43–44 (SA) and Lys189 each bind phosphate. Residue Asp212 coordinates Mg(2+). Residue Asn215 participates in phosphate binding.

It belongs to the HAD-like hydrolase superfamily. Cof family. Requires Mg(2+) as cofactor.

In Haemophilus influenzae (strain ATCC 51907 / DSM 11121 / KW20 / Rd), this protein is Putative phosphatase HI_0003.